Reading from the N-terminus, the 325-residue chain is uncharacterized protein (325 aa).

The segment at 108–141 is disordered; that stretch reads PHRTQGISSTSSKSSKGGKKTPVRSTPKEIKKAT.

This is an uncharacterized protein from Homo sapiens (Human).